A 496-amino-acid polypeptide reads, in one-letter code: NADH-quinone oxidoreductase subunit N (496 aa).

13 consecutive transmembrane segments (helical) span residues 16 to 36 (SLSP…VGAI), 46 to 66 (CVFC…FNGL), 79 to 99 (ISII…PLAL), 116 to 136 (FLFM…LIIF), 166 to 186 (FAMG…FYLA), 208 to 228 (LIIL…LSLI), 245 to 267 (LAGY…IFAM), 278 to 298 (DMLY…ALVQ), 304 to 324 (MLAF…VANS), 331 to 351 (LFFY…MLWV), 382 to 402 (AVIM…SVFW), 422 to 442 (IIMI…VFMF), and 464 to 484 (VIVG…GAIL).

Belongs to the complex I subunit 2 family. NDH-1 is composed of 14 different subunits. Subunits NuoA, H, J, K, L, M, N constitute the membrane sector of the complex.

The protein resides in the cell inner membrane. The catalysed reaction is a quinone + NADH + 5 H(+)(in) = a quinol + NAD(+) + 4 H(+)(out). Functionally, NDH-1 shuttles electrons from NADH, via FMN and iron-sulfur (Fe-S) centers, to quinones in the respiratory chain. The immediate electron acceptor for the enzyme in this species is believed to be ubiquinone. Couples the redox reaction to proton translocation (for every two electrons transferred, four hydrogen ions are translocated across the cytoplasmic membrane), and thus conserves the redox energy in a proton gradient. The polypeptide is NADH-quinone oxidoreductase subunit N (Campylobacter concisus (strain 13826)).